Reading from the N-terminus, the 355-residue chain is UDP-N-acetylglucosamine--N-acetylmuramyl-(pentapeptide) pyrophosphoryl-undecaprenol N-acetylglucosamine transferase (355 aa).

Residues 15-17 (TGG), asparagine 127, arginine 163, serine 191, isoleucine 244, 263-268 (ALTVSE), and glutamine 288 each bind UDP-N-acetyl-alpha-D-glucosamine.

It belongs to the glycosyltransferase 28 family. MurG subfamily.

The protein localises to the cell inner membrane. It catalyses the reaction di-trans,octa-cis-undecaprenyl diphospho-N-acetyl-alpha-D-muramoyl-L-alanyl-D-glutamyl-meso-2,6-diaminopimeloyl-D-alanyl-D-alanine + UDP-N-acetyl-alpha-D-glucosamine = di-trans,octa-cis-undecaprenyl diphospho-[N-acetyl-alpha-D-glucosaminyl-(1-&gt;4)]-N-acetyl-alpha-D-muramoyl-L-alanyl-D-glutamyl-meso-2,6-diaminopimeloyl-D-alanyl-D-alanine + UDP + H(+). It participates in cell wall biogenesis; peptidoglycan biosynthesis. Cell wall formation. Catalyzes the transfer of a GlcNAc subunit on undecaprenyl-pyrophosphoryl-MurNAc-pentapeptide (lipid intermediate I) to form undecaprenyl-pyrophosphoryl-MurNAc-(pentapeptide)GlcNAc (lipid intermediate II). This Escherichia coli (strain 55989 / EAEC) protein is UDP-N-acetylglucosamine--N-acetylmuramyl-(pentapeptide) pyrophosphoryl-undecaprenol N-acetylglucosamine transferase.